Here is a 423-residue protein sequence, read N- to C-terminus: MDKIIVEGGQTQLQGQVVIEGAKNAVLPLLAATILPSQGKTLLTNVPILSDVFTMNNVVRGLDIQVDFNCDKKEILVDASGDILDVAPYEFVSQMRASIVVLGPILARNGHAKVSMPGGCTIGSRPIDLHLKGLEAMGATITQNGGDITAQAEKLKGANIYMDFPSVGATQNLMMAATLASGTTTIENAAREPEIVDLAQLLNKMGAKVKGAGTETLTIIGVDALHGTEHDVVQDRIEAGTFMVAAAMTSGNVLVKDAIWEHNRPLISKLMEMGVEVSEEEDGIRVKADTKKLKPVTVKTLPHPGFPTDMQAQFTALMAVVNGESTMIETVFENRFQHLEEMRRMGLQTEILRDTAMIHGGRALQGAPVMSTDLRASAALILAGMVAQGQTVVGQLTHLDRGYYQFHEKLAALGANIKRVSEA.

23–24 (KN) contributes to the phosphoenolpyruvate binding site. A UDP-N-acetyl-alpha-D-glucosamine-binding site is contributed by Arg96. Cys120 (proton donor) is an active-site residue. Cys120 is subject to 2-(S-cysteinyl)pyruvic acid O-phosphothioketal. Residues 125–129 (RPIDL), Asp309, and Val331 contribute to the UDP-N-acetyl-alpha-D-glucosamine site.

It belongs to the EPSP synthase family. MurA subfamily.

The protein localises to the cytoplasm. It catalyses the reaction phosphoenolpyruvate + UDP-N-acetyl-alpha-D-glucosamine = UDP-N-acetyl-3-O-(1-carboxyvinyl)-alpha-D-glucosamine + phosphate. It participates in cell wall biogenesis; peptidoglycan biosynthesis. Its function is as follows. Cell wall formation. Adds enolpyruvyl to UDP-N-acetylglucosamine. The polypeptide is UDP-N-acetylglucosamine 1-carboxyvinyltransferase 2 (Streptococcus agalactiae serotype Ia (strain ATCC 27591 / A909 / CDC SS700)).